Consider the following 443-residue polypeptide: sn-2 acyl-lipid omega-3 desaturase (ferredoxin), chloroplastic (443 aa).

The transit peptide at 1–51 directs the protein to the chloroplast; that stretch reads MAGLVLSGCAIKPFSQSLPIPTKRFITNPSNINLLHPKDPIFSPNFHGFSR. 2 helical membrane passes run 120–140 and 143–163; these read MSYV…AAHL and WLVW…LFVL. The Histidine box-1 signature appears at 165–169; that stretch reads HDCGH. Positions 201-205 match the Histidine box-2 motif; that stretch reads HRTHH. Helical transmembrane passes span 281-301 and 304-324; these read TICW…VGPV and LKLY…VTYL. The Histidine box-3 signature appears at 368–372; sequence HVIHH.

This sequence belongs to the fatty acid desaturase type 1 family. Highly expressed in leaves and cotyledons, while no or little expression detected in mature seeds, roots and stems.

The protein localises to the plastid. It localises to the chloroplast membrane. It catalyses the reaction a (7Z,10Z)-hexadecadienoyl-containing glycerolipid + 2 reduced [2Fe-2S]-[ferredoxin] + O2 + 2 H(+) = a (7Z,10Z,13Z)-hexadecatrienoyl-containing glycerolipid + 2 oxidized [2Fe-2S]-[ferredoxin] + 2 H2O. The enzyme catalyses a (9Z,12Z)-octadecadienoyl-containing glycerolipid + 2 reduced [2Fe-2S]-[ferredoxin] + O2 + 2 H(+) = (9Z,12Z,15Z)-octadecatrienoyl-containing glycerolipid + 2 oxidized [2Fe-2S]-[ferredoxin] + 2 H2O. It participates in lipid metabolism; polyunsaturated fatty acid biosynthesis. Chloroplast omega-3 fatty acid desaturase introduces the third double bond in the biosynthesis of 18:3, and probably also 16:3 fatty acids, important constituents of plant membranes. It is thought to use ferredoxin as an electron donor and to act on fatty acids esterified to galactolipids, sulfolipids and phosphatidylglycerol. The polypeptide is sn-2 acyl-lipid omega-3 desaturase (ferredoxin), chloroplastic (Helianthus annuus (Common sunflower)).